Reading from the N-terminus, the 430-residue chain is Glutamate-1-semialdehyde 2,1-aminomutase (430 aa).

K267 carries the N6-(pyridoxal phosphate)lysine modification.

This sequence belongs to the class-III pyridoxal-phosphate-dependent aminotransferase family. HemL subfamily. In terms of assembly, homodimer. The cofactor is pyridoxal 5'-phosphate.

The protein resides in the cytoplasm. The catalysed reaction is (S)-4-amino-5-oxopentanoate = 5-aminolevulinate. The protein operates within porphyrin-containing compound metabolism; protoporphyrin-IX biosynthesis; 5-aminolevulinate from L-glutamyl-tRNA(Glu): step 2/2. The chain is Glutamate-1-semialdehyde 2,1-aminomutase from Cytophaga hutchinsonii (strain ATCC 33406 / DSM 1761 / CIP 103989 / NBRC 15051 / NCIMB 9469 / D465).